We begin with the raw amino-acid sequence, 468 residues long: uncharacterized protein (468 aa).

12 helical membrane-spanning segments follow: residues Leu-13–Phe-33, Leu-40–Leu-60, Ala-76–Ile-96, Leu-112–Gly-132, Phe-141–Ala-161, Leu-194–Leu-214, Val-237–Thr-257, Pro-260–Gln-280, Cys-328–Ile-348, Phe-354–Gly-374, Ile-414–Val-434, and Ala-443–Ile-463.

Belongs to the NhaC Na(+)/H(+) (TC 2.A.35) antiporter family.

Its subcellular location is the cell membrane. This is an uncharacterized protein from Haemophilus influenzae (strain ATCC 51907 / DSM 11121 / KW20 / Rd).